The chain runs to 129 residues: Follitropin subunit beta (129 aa).

The signal sequence occupies residues 1–20 (MKTAQFYIFFFCWKAIWCNG). Cystine bridges form between cysteine 21/cysteine 69, cysteine 35/cysteine 84, cysteine 38/cysteine 122, cysteine 46/cysteine 100, cysteine 50/cysteine 102, and cysteine 105/cysteine 112. Asparagine 25 and asparagine 42 each carry an N-linked (GlcNAc...) asparagine glycan.

The protein belongs to the glycoprotein hormones subunit beta family. In terms of assembly, heterodimer. The active follitropin is a heterodimer composed of an alpha chain/CGA shared with other hormones and a unique beta chain/FSHB shown here.

It localises to the secreted. Its function is as follows. Together with the alpha chain CGA constitutes follitropin, the follicle-stimulating hormone, and provides its biological specificity to the hormone heterodimer. Binds FSHR, a G protein-coupled receptor, on target cells to activate downstream signaling pathways. Follitropin is involved in follicle development and spermatogenesis in reproductive organs. The polypeptide is Follitropin subunit beta (FSHB) (Monodelphis domestica (Gray short-tailed opossum)).